We begin with the raw amino-acid sequence, 426 residues long: MAKQIQAIRGMNDILPTQSPLWQKVEAVLRSSVSAYGYSEIRTPIVENTDLFKRSIGEVTDIVEKEMYTFADNNGDSLTLRPEGTASTVRAGNENGLLYNQEQRLWYMGPMFRHERPQKGRYRQFNQFGVEVYGIGTADIDAEVLMLSARLWEKLGISDHVSLELNTLGDPAERAVYRDALIAFLEQHKDALDEDSKRRMYSNPLRVLDSKDQNVQAILAGAPELMDFLGEESKTHFSQLRELLDAVGIKYTINPRLVRGLDYYNRTVFEWVTSSLGSQGTVLAGGRYDGLVAQLGGKDTPAVGFAMGLERIVLLLETLELNKDIPSEVDVYVTAMGDSCLVEAIKIAQELRSALPNLKVMSHCGGGNVKKQMKRADKSGASVALLIGEDELAEGMVTVKHLRNDIEQQRVARSALGAFLAELAIK.

It belongs to the class-II aminoacyl-tRNA synthetase family. Homodimer.

It localises to the cytoplasm. The enzyme catalyses tRNA(His) + L-histidine + ATP = L-histidyl-tRNA(His) + AMP + diphosphate + H(+). This chain is Histidine--tRNA ligase, found in Shewanella baltica (strain OS223).